A 468-amino-acid chain; its full sequence is MYQRMLRCGAELGSPGGGSSGGAGGRLALLWIVPLTLSGLLGVAWGASSLGAHHIHHFHGSSKHHSVPIAIYRSPASLRGGHAGTTYIFSKGGGQITYKWPPNDRPSTRADRLAIGFSTVQKEAVLVRVDSSSGLGDYLELHIHQGKIGVKFNVGTDDIAIEESNAIINDGKYHVVRFTRSGGNATLQVDSWPVIERYPAGNNDNERLAIARQRIPYRLGRVVDEWLLDKGRQLTIFNSQATIIIGGKEQGQPFQGQLSGLYYNGLKVLNMAAENDANIAIVGNVRLVGEVPSSMTTESTATAMQSEMSTSIMETTTTLATSTARRGKPPTKEPISQTTDDILVASAECPSDDEDIDPCEPSSGGLANPTRVGGREPYPGSAEVIRESSSTTGMVVGIVAAAALCILILLYAMYKYRNRDEGSYHVDESRNYISNSAQSNGAVVKEKQPSSAKSANKNKKNKDKEYYV.

A signal peptide spans 1–46 (MYQRMLRCGAELGSPGGGSSGGAGGRLALLWIVPLTLSGLLGVAWG). Residues 47-391 (ASSLGAHHIH…AEVIRESSST (345 aa)) lie on the Extracellular side of the membrane. Residues 87 to 285 (YIFSKGGGQI…DANIAIVGNV (199 aa)) enclose the Laminin G-like domain. Ca(2+) contacts are provided by aspartate 137 and valine 154. N-linked (GlcNAc...) asparagine glycosylation occurs at asparagine 184. Positions 201–230 (GNNDNERLAIARQRIPYRLGRVVDEWLLDK) are essential for interaction with CBLN1; modulates interaction affinity with NLGN1, NLGN2 and NLGN3; prevents interaction with DAG1/alpha-dystroglycan; modulates interaction with alpha-latrotoxin. Isoleucine 236 and asparagine 238 together coordinate Ca(2+). Serine 346 carries O-linked (Xyl...) (heparan sulfate) serine glycosylation. The tract at residues 350–381 (PSDDEDIDPCEPSSGGLANPTRVGGREPYPGS) is disordered. A helical membrane pass occupies residues 392 to 414 (TGMVVGIVAAAALCILILLYAMY). The Cytoplasmic portion of the chain corresponds to 415 to 468 (KYRNRDEGSYHVDESRNYISNSAQSNGAVVKEKQPSSAKSANKNKKNKDKEYYV). Positions 435 to 468 (NSAQSNGAVVKEKQPSSAKSANKNKKNKDKEYYV) are disordered. Phosphoserine occurs at positions 450, 451, and 454.

The protein belongs to the neurexin family. In terms of assembly, the cytoplasmic C-terminal region binds to CASK. Binds NLGN1, NLGN2 and NLGN3, DAG1 (alpha-dystroglycan) and alpha-latrotoxin. Binding to neuroligins is calcium-dependent, and the binding preference ranks as follow: NLGN1 &gt; NLGN4 &gt;&gt; NLGN3 &gt; NLGN2. Interacts with CBLN2 and more weakly with CBLN4. Interacts with CBLN1; interaction is CBLN1 hexamer form-dependent; CBLN1-binding is calcium-independent; isoform 1b does not interact with CBLN1. Interacts with CLSTN3. N-glycosylated. In terms of processing, O-glycosylated; contains heparan sulfate. Heparan sulfate attachment is required for synapse development by mediating interactions with neuroligins. In terms of tissue distribution, brain.

It localises to the presynaptic cell membrane. Neuronal cell surface protein involved in cell recognition and cell adhesion by forming intracellular junctions through binding to neuroligins. Plays a role in formation of synaptic junctions. Functions as part of a trans-synaptic complex by binding to cerebellins and postsynaptic GRID1. This interaction helps regulate the activity of NMDA and AMPA receptors at hippocampal synapses without affecting synapse formation. NRXN1B-CBLN2-GRID1 complex transduce presynaptic signals into postsynaptic NMDAR response. This chain is Neurexin-1-beta, found in Rattus norvegicus (Rat).